A 201-amino-acid chain; its full sequence is Glutathione peroxidase 1 (201 aa).

Phosphoserine occurs at positions 7 and 32. The active site involves selenocysteine 47. Selenocysteine 47 is a non-standard amino acid (selenocysteine). 3 positions are modified to N6-acetyllysine; alternate: lysine 62, lysine 86, and lysine 112. N6-succinyllysine; alternate occurs at positions 62, 86, and 112. Lysine 119 carries the N6-acetyllysine modification. Lysine 146 is modified (N6-acetyllysine; alternate). Lysine 146 carries the post-translational modification N6-succinyllysine; alternate. Residue serine 195 is modified to Phosphoserine.

It belongs to the glutathione peroxidase family. Homotetramer. Interacts with MIEN1. During periods of oxidative stress, Sec-47 may react with a superoxide radical, irreversibly lose hydroselenide and be converted to dehydroalanine. As to expression, expressed in liver, kidney, lung, brain and heart.

Its subcellular location is the cytoplasm. It is found in the mitochondrion. It catalyses the reaction 2 glutathione + H2O2 = glutathione disulfide + 2 H2O. The catalysed reaction is a hydroperoxy polyunsaturated fatty acid + 2 glutathione = a hydroxy polyunsaturated fatty acid + glutathione disulfide + H2O. The enzyme catalyses tert-butyl hydroperoxide + 2 glutathione = tert-butanol + glutathione disulfide + H2O. It carries out the reaction cumene hydroperoxide + 2 glutathione = 2-phenylpropan-2-ol + glutathione disulfide + H2O. It catalyses the reaction (13S)-hydroperoxy-(9Z,11E)-octadecadienoate + 2 glutathione = (13S)-hydroxy-(9Z,11E)-octadecadienoate + glutathione disulfide + H2O. The catalysed reaction is (9S)-hydroperoxy-(10E,12Z)-octadecadienoate + 2 glutathione = (9S)-hydroxy-(10E,12Z)-octadecadienoate + glutathione disulfide + H2O. The enzyme catalyses (5S)-hydroperoxy-(6E,8Z,11Z,14Z)-eicosatetraenoate + 2 glutathione = (5S)-hydroxy-(6E,8Z,11Z,14Z)-eicosatetraenoate + glutathione disulfide + H2O. It carries out the reaction (12S)-hydroperoxy-(5Z,8Z,10E,14Z)-eicosatetraenoate + 2 glutathione = (12S)-hydroxy-(5Z,8Z,10E,14Z)-eicosatetraenoate + glutathione disulfide + H2O. It catalyses the reaction (12R)-hydroperoxy-(5Z,8Z,10E,14Z)-eicosatetraenoate + 2 glutathione = (12R)-hydroxy-(5Z,8Z,10E,14Z)-eicosatetraenoate + glutathione disulfide + H2O. The catalysed reaction is (15S)-hydroperoxy-(5Z,8Z,11Z,13E)-eicosatetraenoate + 2 glutathione = (15S)-hydroxy-(5Z,8Z,11Z,13E)-eicosatetraenoate + glutathione disulfide + H2O. The enzyme catalyses (5S)-hydroperoxy-(6E,8Z,11Z,14Z,17Z)-eicosapentaenoate + 2 glutathione = (5S)-hydroxy-(6E,8Z,11Z,14Z,17Z)-eicosapentaenoate + glutathione disulfide + H2O. It carries out the reaction (12S)-hydroperoxy-(5Z,8Z,10E,14Z,17Z)-eicosapentaenoate + 2 glutathione = (12S)-hydroxy-(5Z,8Z,10E,14Z,17Z)-eicosapentaenoate + glutathione disulfide + H2O. It catalyses the reaction (15S)-hydroperoxy-(5Z,8Z,11Z,13E,17Z)-eicosapentaenoate + 2 glutathione = (15S)-hydroxy-(5Z,8Z,11Z,13E,17Z)-eicosapentaenoate + glutathione disulfide + H2O. The catalysed reaction is (15S)-hydroperoxy-(11Z,13E)-eicosadienoate + 2 glutathione = (15S)-hydroxy-(11Z,13E)-eicosadienoate + glutathione disulfide + H2O. The enzyme catalyses (17S)-hydroperoxy-(4Z,7Z,10Z,13Z,15E,19Z)-docosahexaenoate + 2 glutathione = (17S)-hydroxy-(4Z,7Z,10Z,13Z,15E,19Z)-docosahexaenoate + glutathione disulfide + H2O. Functionally, catalyzes the reduction of hydroperoxides in a glutathione-dependent manner thus regulating cellular redox homeostasis. Can reduce small soluble hydroperoxides such as H2O2, cumene hydroperoxide and tert-butyl hydroperoxide, as well as several fatty acid-derived hydroperoxides. In platelets catalyzes the reduction of 12-hydroperoxyeicosatetraenoic acid, the primary product of the arachidonate 12-lipoxygenase pathway. This Mus musculus (Mouse) protein is Glutathione peroxidase 1.